Consider the following 143-residue polypeptide: uncharacterized protein (143 aa).

2 helical membrane-spanning segments follow: residues 16–36 and 48–68; these read LIFA…IFVW and ICYI…FIYV. N-linked (GlcNAc...) asparagine; by host glycosylation is present at asparagine 71.

It localises to the membrane. This is an uncharacterized protein from Acanthamoeba polyphaga (Amoeba).